Here is a 388-residue protein sequence, read N- to C-terminus: Processive diacylglycerol beta-glucosyltransferase (388 aa).

It belongs to the glycosyltransferase 28 family. UgtP subfamily.

It is found in the cell membrane. It carries out the reaction a 1,2-diacyl-3-O-(beta-D-glucopyranosyl)-sn-glycerol + UDP-alpha-D-glucose = a 1,2-diacyl-3-O-(beta-D-Glc-(1-&gt;6)-beta-D-Glc)-sn-glycerol + UDP + H(+). The enzyme catalyses a 1,2-diacyl-3-O-(beta-D-Glc-(1-&gt;6)-beta-D-Glc)-sn-glycerol + UDP-alpha-D-glucose = a 1,2-diacyl-3-O-(beta-D-Glc-(1-&gt;6)-beta-D-Glc-(1-&gt;6)-beta-D-Glc)-sn-glycerol + UDP + H(+). The catalysed reaction is a 1,2-diacyl-sn-glycerol + UDP-alpha-D-glucose = a 1,2-diacyl-3-O-(beta-D-glucopyranosyl)-sn-glycerol + UDP + H(+). It functions in the pathway glycolipid metabolism; diglucosyl-diacylglycerol biosynthesis. Processive glucosyltransferase involved in the biosynthesis of both the bilayer- and non-bilayer-forming membrane glucolipids. Is able to successively transfer up to three glucosyl residues to diacylglycerol (DAG), thereby catalyzing the formation of beta-monoglucosyl-DAG (3-O-(beta-D-glucopyranosyl)-1,2-diacyl-sn-glycerol), beta-diglucosyl-DAG (3-O-(beta-D-glucopyranosyl-beta-(1-&gt;6)-D-glucopyranosyl)-1,2-diacyl-sn-glycerol) and beta-triglucosyl-DAG (3-O-(beta-D-glucopyranosyl-beta-(1-&gt;6)-D-glucopyranosyl-beta-(1-&gt;6)-D-glucopyranosyl)-1,2-diacyl-sn-glycerol). Beta-diglucosyl-DAG is the predominant glycolipid found in Bacillales and is also used as a membrane anchor for lipoteichoic acid (LTA). The protein is Processive diacylglycerol beta-glucosyltransferase of Bacillus cereus (strain ZK / E33L).